We begin with the raw amino-acid sequence, 317 residues long: uncharacterized protein (317 aa).

Topologically, residues 1 to 13 (MKRVTGVFLTLLR) are cytoplasmic. Residues 14 to 34 (FSQFASSVLVMSLLAYAIHAY) form a helical membrane-spanning segment. Residues 35–49 (GNRGNKKTNFTLATG) lie on the Extracellular side of the membrane. The N-linked (GlcNAc...) asparagine glycan is linked to asparagine 43. Residues 50 to 70 (VISVFYLIALGILCLALPTLI) traverse the membrane as a helical segment. Position 71 (tyrosine 71) is a topological domain, cytoplasmic. A helical transmembrane segment spans residues 72-92 (IGMYFCAELIVCMLWLAAFVV). The Extracellular segment spans residues 93–133 (LAKAQGERSCSNTNADGLYYNPYSGQYTADSHRRACNSSQA). Asparagine 129 is a glycosylation site (N-linked (GlcNAc...) asparagine). The helical transmembrane segment at 134–154 (AIAFSGLCFVLFLISVILLGI) threads the bilayer. Residues 155–317 (NVLTPIRKRY…EPNRNVNQMP (163 aa)) are Cytoplasmic-facing. The tract at residues 204–317 (RTGDVEAGAG…EPNRNVNQMP (114 aa)) is disordered. Positions 239 to 250 (TTTTNTRYTTTT) are enriched in low complexity. Positions 256–282 (RYTTNDRNPGSANVANSAVDQHAYSTD) are enriched in polar residues. Over residues 284 to 295 (SGDRSYQEKVTE) the composition is skewed to basic and acidic residues. Residues 302 to 317 (MSGSTAEPNRNVNQMP) show a composition bias toward polar residues.

Its subcellular location is the membrane. This is an uncharacterized protein from Saccharomyces cerevisiae (strain ATCC 204508 / S288c) (Baker's yeast).